The primary structure comprises 96 residues: Co-chaperonin GroES (96 aa).

Belongs to the GroES chaperonin family. In terms of assembly, heptamer of 7 subunits arranged in a ring. Interacts with the chaperonin GroEL.

It is found in the cytoplasm. Functionally, together with the chaperonin GroEL, plays an essential role in assisting protein folding. The GroEL-GroES system forms a nano-cage that allows encapsulation of the non-native substrate proteins and provides a physical environment optimized to promote and accelerate protein folding. GroES binds to the apical surface of the GroEL ring, thereby capping the opening of the GroEL channel. The polypeptide is Co-chaperonin GroES (Acidithiobacillus ferrooxidans (strain ATCC 23270 / DSM 14882 / CIP 104768 / NCIMB 8455) (Ferrobacillus ferrooxidans (strain ATCC 23270))).